The chain runs to 338 residues: L-asparaginase 1 (338 aa).

The 326-residue stretch at 4–329 (KSIYVAYTGG…ETIRKAMSQN (326 aa)) folds into the Asparaginase/glutaminase domain. Thr14 (O-isoaspartyl threonine intermediate) is an active-site residue. Substrate contacts are provided by residues 59-61 (DSS) and 91-92 (TD).

The protein belongs to the asparaginase 1 family. As to quaternary structure, homotetramer.

The protein resides in the cytoplasm. It carries out the reaction L-asparagine + H2O = L-aspartate + NH4(+). The chain is L-asparaginase 1 (ansA) from Escherichia coli O157:H7.